A 91-amino-acid polypeptide reads, in one-letter code: MASLKKSLFLVLFLGLVSLSICEKEKRENEGNENEEEEENHEEGSEEKRGLLDLAKHVIGIASKLGKRSEEKRGLLDFAKHVIGIASKLGK.

The N-terminal stretch at 1-22 (MASLKKSLFLVLFLGLVSLSIC) is a signal peptide. Residues 23 to 49 (EKEKRENEGNENEEEEENHEEGSEEKR) constitute a propeptide that is removed on maturation. Positions 24–49 (KEKRENEGNENEEEEENHEEGSEEKR) are disordered. A compositionally biased stretch (acidic residues) spans 31-41 (GNENEEEEENH). Position 65 is a leucine amide (Leu-65). The propeptide occupies 69-73 (SEEKR). Leu-89 bears the Leucine amide mark.

It belongs to the frog skin active peptide (FSAP) family. Dermaseptin subfamily. Expressed by the skin glands.

It localises to the secreted. Fallaxidin-3.1 shows antibacterial activity against the Gram-positive bacteria E.faecalis (MIC=100 uM) and L.lactis (MIC=100 uM). No antibacterial activity against the Gram-positive bacteria B.cereus, L.innocua, M.luteus, S.epidermidis, S.uberis and S.aureus, or the Gram-negative bacteria E.cloacae and E.coli. Functionally, fallaxidin-3.2 shows antibacterial activity against the Gram-positive bacteria E.faecalis (MIC=100 uM) and L.lactis (MIC=500 uM). No antibacterial activity against the Gram-positive bacteria B.cereus, L.innocua, M.luteus, S.epidermidis, S.uberis and S.aureus, or the Gram-negative bacteria E.cloacae and E.coli. This is Preprofallaxidin-2 from Litoria fallax (Eastern dwarf tree frog).